The chain runs to 729 residues: Triadin (729 aa).

The segment at 1-28 is disordered; the sequence is MTEITAEGNASTTTTVIDSKNGSVPKSP. Residues 1–47 lie on the Cytoplasmic side of the membrane; sequence MTEITAEGNASTTTTVIDSKNGSVPKSPGKVLKRTVTEDIVTTFSSP. Positions 8-24 are enriched in polar residues; sequence GNASTTTTVIDSKNGSV. A helical membrane pass occupies residues 48-68; the sequence is AAWLLVIALIITWSAVAIVMF. Residues 69–729 are Lumenal-facing; sequence DLVDYKNFSA…NSPGQKQQGQ (661 aa). The N-linked (GlcNAc...) asparagine glycan is linked to Asn75. Acidic residues predominate over residues 117–129; it reads EDEEDDDGDEDTD. Disordered regions lie at residues 117–265, 281–682, and 705–729; these read EDEE…EQKD, DLKP…PTKQ, and PFTPADRPGESSGQANSPGQKQQGQ. Basic and acidic residues-rich tracts occupy residues 130–265, 309–357, 371–433, 444–509, 516–531, 538–562, 580–598, and 609–674; these read KGEI…EQKD, LEEK…KASE, AKKD…KEEI, GKKE…EVKP, GKKEEKPEPQIKKEAK, VQIHKQDIVKPEKTVSHGKPEEKVL, KKAEHREREPPSIKTDKPK, and ESGK…KEGT. An N-linked (GlcNAc...) asparagine glycan is attached at Asn647. Positions 715–729 are enriched in polar residues; that stretch reads SSGQANSPGQKQQGQ.

Homooligomer of variable subunit number; disulfide-linked. Interacts with CASQ1 and RYR1 in skeletal muscle. Interacts with CASQ2. In terms of processing, phosphorylated by CaMK2. N-glycosylated.

It is found in the cell membrane. The protein localises to the sarcoplasmic reticulum membrane. Its function is as follows. Contributes to the regulation of lumenal Ca2+ release via the sarcoplasmic reticulum calcium release channels RYR1 and RYR2, a key step in triggering skeletal and heart muscle contraction. Required for normal organization of the triad junction, where T-tubules and the sarcoplasmic reticulum terminal cisternae are in close contact. Required for normal skeletal muscle strength. Plays a role in excitation-contraction coupling in the heart and in regulating the rate of heart beats. The protein is Triadin (TRDN) of Homo sapiens (Human).